The chain runs to 483 residues: Salicylaldehyde dehydrogenase (483 aa).

228–233 (GSTRVG) serves as a coordination point for NAD(+). Catalysis depends on residues E250 and C284.

It belongs to the aldehyde dehydrogenase family.

It catalyses the reaction salicylaldehyde + NAD(+) + H2O = salicylate + NADH + 2 H(+). It participates in aromatic compound metabolism; naphthalene degradation. The polypeptide is Salicylaldehyde dehydrogenase (nahF) (Pseudomonas putida (Arthrobacter siderocapsulatus)).